Consider the following 675-residue polypeptide: UvrABC system protein B (675 aa).

The 386-residue stretch at 32 to 417 folds into the Helicase ATP-binding domain; sequence EGLSDGLAYQ…EHAGQVVEQV (386 aa). 45 to 52 is an ATP binding site; it reads GVTGSGKT. The Beta-hairpin motif lies at 98-121; that stretch reads YYDYYQPEAYVPSRDLFIEKDSAI. One can recognise a Helicase C-terminal domain in the interval 436 to 602; it reads QVDDLMSEIN…QIKKQVKDII (167 aa). The 36-residue stretch at 634-669 folds into the UVR domain; it reads IKEIAKLEKAMQQAARDLQFEEAAVLRDRIRNIKEN.

Belongs to the UvrB family. As to quaternary structure, forms a heterotetramer with UvrA during the search for lesions. Interacts with UvrC in an incision complex.

It is found in the cytoplasm. Functionally, the UvrABC repair system catalyzes the recognition and processing of DNA lesions. A damage recognition complex composed of 2 UvrA and 2 UvrB subunits scans DNA for abnormalities. Upon binding of the UvrA(2)B(2) complex to a putative damaged site, the DNA wraps around one UvrB monomer. DNA wrap is dependent on ATP binding by UvrB and probably causes local melting of the DNA helix, facilitating insertion of UvrB beta-hairpin between the DNA strands. Then UvrB probes one DNA strand for the presence of a lesion. If a lesion is found the UvrA subunits dissociate and the UvrB-DNA preincision complex is formed. This complex is subsequently bound by UvrC and the second UvrB is released. If no lesion is found, the DNA wraps around the other UvrB subunit that will check the other stand for damage. In Neisseria meningitidis serogroup A / serotype 4A (strain DSM 15465 / Z2491), this protein is UvrABC system protein B.